A 648-amino-acid chain; its full sequence is Threonine--tRNA ligase (648 aa).

In terms of domain architecture, TGS spans 1–63; sequence MAQISLTFPD…HADATIAIHT (63 aa). Positions 247 to 544 are catalytic; the sequence is DHRKLGREMD…LIENSAGKLP (298 aa). Cys344, His395, and His521 together coordinate Zn(2+).

Belongs to the class-II aminoacyl-tRNA synthetase family. Homodimer. Zn(2+) serves as cofactor.

The protein resides in the cytoplasm. It catalyses the reaction tRNA(Thr) + L-threonine + ATP = L-threonyl-tRNA(Thr) + AMP + diphosphate + H(+). Functionally, catalyzes the attachment of threonine to tRNA(Thr) in a two-step reaction: L-threonine is first activated by ATP to form Thr-AMP and then transferred to the acceptor end of tRNA(Thr). Also edits incorrectly charged L-seryl-tRNA(Thr). The sequence is that of Threonine--tRNA ligase from Roseobacter denitrificans (strain ATCC 33942 / OCh 114) (Erythrobacter sp. (strain OCh 114)).